Consider the following 255-residue polypeptide: HLA class II histocompatibility antigen, DQ alpha 2 chain (255 aa).

Positions 1 to 23 are cleaved as a signal peptide; it reads MILNKALLLGALALTAVMSPCGG. The alpha-1 stretch occupies residues 24-110; sequence EDIVADHVAS…RQSNSTAATN (87 aa). The Extracellular segment spans residues 24–217; that stretch reads EDIVADHVAS…IPAPMSELTE (194 aa). N-linked (GlcNAc...) asparagine glycans are attached at residues Asn-104 and Asn-144. The interval 111-204 is alpha-2; sequence EVPEVTVFSK…GLDEPLLKHW (94 aa). An Ig-like C1-type domain is found at 113–205; sequence PEVTVFSKFP…LDEPLLKHWE (93 aa). Cys-133 and Cys-189 form a disulfide bridge. Residues 205–217 form a connecting peptide region; the sequence is EPEIPAPMSELTE. Residues 218–240 traverse the membrane as a helical segment; that stretch reads TLVCALGLSVGLMGIVVGTVFII. The Cytoplasmic segment spans residues 241-255; the sequence is QGLRSVGASRHQGLL.

The protein belongs to the MHC class II family. Heterodimer of an alpha and a beta subunit; also referred as MHC class II molecule. Dimer formation with HLA-DQB2, but not with HLA-DQB1, is required for efficient exit from the endoplasmic reticulum (ER). In the ER, forms a heterononamer; 3 MHC class II molecules bind to a CD74 homotrimer (also known as invariant chain or HLA class II histocompatibility antigen gamma chain). In the endosomal/lysosomal system; CD74 undergoes sequential degradation by various proteases; leaving a small fragment termed CLIP on each MHC class II molecule. MHC class II molecule interacts with HLA_DM, and HLA_DO in B-cells, in order to release CLIP and facilitate the binding of antigenic peptides. Association with HLA-DMA also occurs in skin Langerhans cells, in post-Golgi compartments. In terms of tissue distribution, restricted to skin Langerhans cells, although some expression at low levels may occur at the surface of B lymphoblastoid cells.

The protein localises to the cell membrane. It is found in the endoplasmic reticulum membrane. The protein resides in the golgi apparatus. Its subcellular location is the trans-Golgi network membrane. It localises to the endosome membrane. The protein localises to the lysosome membrane. Binds peptides derived from antigens that access the endocytic route of antigen presenting cells (APC) and presents them on the cell surface for recognition by the CD4 T-cells. The peptide binding cleft accommodates peptides of 10-30 residues. The peptides presented by MHC class II molecules are generated mostly by degradation of proteins that access the endocytic route, where they are processed by lysosomal proteases and other hydrolases. Exogenous antigens that have been endocytosed by the APC are thus readily available for presentation via MHC II molecules, and for this reason this antigen presentation pathway is usually referred to as exogenous. As membrane proteins on their way to degradation in lysosomes as part of their normal turn-over are also contained in the endosomal/lysosomal compartments, exogenous antigens must compete with those derived from endogenous components. Autophagy is also a source of endogenous peptides, autophagosomes constitutively fuse with MHC class II loading compartments. In addition to APCs, other cells of the gastrointestinal tract, such as epithelial cells, express MHC class II molecules and CD74 and act as APCs, which is an unusual trait of the GI tract. To produce a MHC class II molecule that presents an antigen, three MHC class II molecules (heterodimers of an alpha and a beta chain) associate with a CD74 trimer in the ER to form a heterononamer. Soon after the entry of this complex into the endosomal/lysosomal system where antigen processing occurs, CD74 undergoes a sequential degradation by various proteases, including CTSS and CTSL, leaving a small fragment termed CLIP (class-II-associated invariant chain peptide). The removal of CLIP is facilitated by HLA-DM via direct binding to the alpha-beta-CLIP complex so that CLIP is released. HLA-DM stabilizes MHC class II molecules until primary high affinity antigenic peptides are bound. The MHC II molecule bound to a peptide is then transported to the cell membrane surface. In B-cells, the interaction between HLA-DM and MHC class II molecules is regulated by HLA-DO. Primary dendritic cells (DCs) also to express HLA-DO. Lysosomal microenvironment has been implicated in the regulation of antigen loading into MHC II molecules, increased acidification produces increased proteolysis and efficient peptide loading. This is HLA class II histocompatibility antigen, DQ alpha 2 chain (HLA-DQA2) from Homo sapiens (Human).